The chain runs to 308 residues: Glycine--tRNA ligase alpha subunit (308 aa).

It belongs to the class-II aminoacyl-tRNA synthetase family. Tetramer of two alpha and two beta subunits.

It is found in the cytoplasm. The enzyme catalyses tRNA(Gly) + glycine + ATP = glycyl-tRNA(Gly) + AMP + diphosphate. This is Glycine--tRNA ligase alpha subunit from Brevibacillus brevis (strain 47 / JCM 6285 / NBRC 100599).